A 40-amino-acid chain; its full sequence is Dermonecrotic toxin LgSicTox-alphaI-1 (40 aa).

Mg(2+) contacts are provided by E32 and D34.

This sequence belongs to the arthropod phospholipase D family. Class II subfamily. It depends on Mg(2+) as a cofactor. Contains 2 disulfide bonds. Expressed by the venom gland.

Its subcellular location is the secreted. It carries out the reaction an N-(acyl)-sphingosylphosphocholine = an N-(acyl)-sphingosyl-1,3-cyclic phosphate + choline. It catalyses the reaction an N-(acyl)-sphingosylphosphoethanolamine = an N-(acyl)-sphingosyl-1,3-cyclic phosphate + ethanolamine. The catalysed reaction is a 1-acyl-sn-glycero-3-phosphocholine = a 1-acyl-sn-glycero-2,3-cyclic phosphate + choline. The enzyme catalyses a 1-acyl-sn-glycero-3-phosphoethanolamine = a 1-acyl-sn-glycero-2,3-cyclic phosphate + ethanolamine. Dermonecrotic toxins cleave the phosphodiester linkage between the phosphate and headgroup of certain phospholipids (sphingolipid and lysolipid substrates), forming an alcohol (often choline) and a cyclic phosphate. This toxin acts on sphingomyelin (SM). It may also act on ceramide phosphoethanolamine (CPE), lysophosphatidylcholine (LPC) and lysophosphatidylethanolamine (LPE), but not on lysophosphatidylserine (LPS), and lysophosphatidylglycerol (LPG). It acts by transphosphatidylation, releasing exclusively cyclic phosphate products as second products. In vivo, intradermal injection induces dermonecrosis. Induces, hemolysis, vascular permeability, edema, inflammatory response, and platelet aggregation. The protein is Dermonecrotic toxin LgSicTox-alphaI-1 of Loxosceles gaucho (Spider).